The sequence spans 413 residues: Glutamyl-tRNA reductase (413 aa).

Substrate-binding positions include 49–52 (TCNR), Ser-105, 110–112 (EPQ), and Gln-116. The active-site Nucleophile is Cys-50. 185 to 190 (GAGETI) provides a ligand contact to NADP(+).

This sequence belongs to the glutamyl-tRNA reductase family. As to quaternary structure, homodimer.

The catalysed reaction is (S)-4-amino-5-oxopentanoate + tRNA(Glu) + NADP(+) = L-glutamyl-tRNA(Glu) + NADPH + H(+). Its pathway is porphyrin-containing compound metabolism; protoporphyrin-IX biosynthesis; 5-aminolevulinate from L-glutamyl-tRNA(Glu): step 1/2. Its function is as follows. Catalyzes the NADPH-dependent reduction of glutamyl-tRNA(Glu) to glutamate 1-semialdehyde (GSA). The chain is Glutamyl-tRNA reductase from Coxiella burnetii (strain Dugway 5J108-111).